The chain runs to 282 residues: Bis(5'-nucleosyl)-tetraphosphatase, symmetrical (282 aa).

The protein belongs to the Ap4A hydrolase family.

It carries out the reaction P(1),P(4)-bis(5'-adenosyl) tetraphosphate + H2O = 2 ADP + 2 H(+). Functionally, hydrolyzes diadenosine 5',5'''-P1,P4-tetraphosphate to yield ADP. The chain is Bis(5'-nucleosyl)-tetraphosphatase, symmetrical from Shigella dysenteriae serotype 1 (strain Sd197).